A 1104-amino-acid polypeptide reads, in one-letter code: Protein KIBRA (1104 aa).

WW domains follow at residues 6-39 (LPLP…DPRD) and 53-86 (DELP…DPRV). Residues 107-193 (LSAQKEIYQV…ELQFKERGFQ (87 aa)) adopt a coiled-coil conformation. Position 141 is a phosphoserine (serine 141). 2 disordered regions span residues 429 to 449 (SMQS…RGSL) and 509 to 547 (TQKA…SPPC). The span at 527-542 (TPRSMTSLSPRSSLSS) shows a compositional bias: low complexity. Serine 535 is modified (phosphoserine). Serine 542 bears the Phosphoserine; by CDK1 mark. One can recognise a C2 domain in the interval 659-782 (GATRVQIALK…RSGERSTRWY (124 aa)). Residues 822 to 949 (LEKRQEGRSS…DSSTLSKKPP (128 aa)) form a disordered region. The interval 836 to 1104 (EGSWTYEEEA…NIPALSADDV (269 aa)) is interaction with histone H3. Acidic residues predominate over residues 841 to 862 (YEEEASENEAVAEEEEEGEEDV). Serine 887, serine 891, and serine 919 each carry phosphoserine. Over residues 916–930 (IIRSKTFSPGPQSQY) the composition is skewed to polar residues. Position 921 is a phosphothreonine (threonine 921). At serine 923 the chain carries Phosphoserine; by CDK1. The residue at position 939 (serine 939) is a Phosphoserine. 2 interaction with PRKCZ regions span residues 945–988 (SKKP…LDLQ) and 948–967 (PPFV…RPSS). Residues serine 967 and serine 970 each carry the phosphoserine; by PKC/PRKCZ modification. The stretch at 994–1024 (HSQLTQEISVLKELKEHLEQAKNHGEKELPQ) forms a coiled coil. The short motif at 1102 to 1104 (DDV) is the ADDV motif element.

The protein belongs to the WWC family. KIBRA subfamily. In terms of assembly, homodimer. Forms heterodimers with WWC2 and WWC3. Interacts with DDN. Interacts with DYNLL1 and histone H3. The interaction with DYNLL1 is mandatory for the recruitment and transactivation functions of ESR1 or DYNLL1 to the target chromatin and the interaction with histone H3 ensures proper regulatory interaction of WWC1-DYNLL1-ESR1 complexes with target chromatin. Interacts (via WW domains) with DDR1 (via PPxY motif) in a collagen-regulated manner. Interacts with PRKCZ (via the protein kinase domain). Forms a tripartite complex with DDR1 and PRKCZ, but predominantly in the absence of collagen. Interacts (via the ADDV motif) with PATJ (via PDZ domain 8). Interacts (via WW domains) with SYNPO (via PPxY motifs). Interacts with NF2 and SNX4. Interacts with CCDC141; retains AMPAR in the cytosol after internalization. Interacts with DLC1 and PRKCZ. Interacts (via WW domains) with LATS1 and LATS2. Phosphorylation at Ser-542 and Ser-923 by CDK1 in response to spindle damage stress regulates mitotic exit, these two sites are dephosphorylated by CDC14B. Mammary epithelium.

The protein localises to the cytoplasm. It is found in the perinuclear region. The protein resides in the nucleus. It localises to the cell projection. Its subcellular location is the ruffle membrane. The protein localises to the cytosol. In terms of biological role, regulator of the Hippo signaling pathway, also known as the Salvador-Warts-Hippo (SWH) pathway. Enhances phosphorylation of LATS1 and YAP1 and negatively regulates cell proliferation and organ growth due to a suppression of the transcriptional activity of YAP1, the major effector of the Hippo pathway. Along with NF2 can synergistically induce the phosphorylation of LATS1 and LATS2 and function in the regulation of Hippo signaling pathway. Acts as a transcriptional coactivator of ESR1 which plays an essential role in DYNLL1-mediated ESR1 transactivation. Modulates directional migration of podocytes. May be associated with memory performance. Regulates collagen-stimulated activation of the ERK/MAPK cascade. Plays an important role in regulating AMPA-selective glutamate receptors (AMPARs) trafficking. The polypeptide is Protein KIBRA (Wwc1) (Mus musculus (Mouse)).